Here is a 341-residue protein sequence, read N- to C-terminus: MVSSQAKYELIQEVGRGSYGVVYEAVVRQTGARVAVEKIRCHSPENVELALREFWALSSIQSQHPNVIHLEECVLQRDALAQRMSHGSSSSLYLELVETSLKGEITFDPCCAYYMWFVMDFCDGGDMNAYLLSRKPSRKTNTSFMLQLGSALAFLHRNQIIHRDLKPDNILISQGRTPAGSPEPTLKVADFGLSKVCSGSGLNPEEPASVNKCFLSTACGTDFYMAPEVWEGHYTAKADIFALGVIIWAMVERITFVDVETQKELLGSYVQQGEDIVPLGEALLENPKMELNIPARKKSMNASMKQLIREMLSANPQERPDAFELELRLVRIACRELDWDT.

The region spanning 8 to 332 (YELIQEVGRG…FELELRLVRI (325 aa)) is the Protein kinase domain. 14–22 (VGRGSYGVV) serves as a coordination point for ATP. Aspartate 164 acts as the Proton acceptor in catalysis.

It belongs to the protein kinase superfamily. Ser/Thr protein kinase family.

The protein localises to the nucleus. The enzyme catalyses L-seryl-[protein] + ATP = O-phospho-L-seryl-[protein] + ADP + H(+). It catalyses the reaction L-threonyl-[protein] + ATP = O-phospho-L-threonyl-[protein] + ADP + H(+). In Danio rerio (Zebrafish), this protein is Serine/threonine-protein kinase pdik1l (pdik1l).